Consider the following 383-residue polypeptide: Cell division protein FtsZ (383 aa).

Residues G20–N24, G107–G109, E138, R142, and N186 contribute to the GTP site.

Belongs to the FtsZ family. Homodimer. Polymerizes to form a dynamic ring structure in a strictly GTP-dependent manner. Interacts directly with several other division proteins.

It is found in the cytoplasm. Its function is as follows. Essential cell division protein that forms a contractile ring structure (Z ring) at the future cell division site. The regulation of the ring assembly controls the timing and the location of cell division. One of the functions of the FtsZ ring is to recruit other cell division proteins to the septum to produce a new cell wall between the dividing cells. Binds GTP and shows GTPase activity. The polypeptide is Cell division protein FtsZ (Escherichia coli O157:H7).